The chain runs to 150 residues: Aspartate 1-decarboxylase (150 aa).

The Schiff-base intermediate with substrate; via pyruvic acid role is filled by Ser24. Pyruvic acid (Ser) is present on Ser24. Position 56 (Thr56) interacts with substrate. Residue Tyr57 is the Proton donor of the active site. A substrate-binding site is contributed by Gly72–Ala74.

It belongs to the PanD family. Heterooctamer of four alpha and four beta subunits. It depends on pyruvate as a cofactor. In terms of processing, is synthesized initially as an inactive proenzyme, which is activated by self-cleavage at a specific serine bond to produce a beta-subunit with a hydroxyl group at its C-terminus and an alpha-subunit with a pyruvoyl group at its N-terminus.

The protein localises to the cytoplasm. The enzyme catalyses L-aspartate + H(+) = beta-alanine + CO2. Its pathway is cofactor biosynthesis; (R)-pantothenate biosynthesis; beta-alanine from L-aspartate: step 1/1. Catalyzes the pyruvoyl-dependent decarboxylation of aspartate to produce beta-alanine. This Xanthobacter autotrophicus (strain ATCC BAA-1158 / Py2) protein is Aspartate 1-decarboxylase.